The primary structure comprises 30 residues: LIM and SH3 domain protein 1 (30 aa).

Methionine 1 carries the N-acetylmethionine modification. The LIM zinc-binding domain maps to 5-30 (CARCGKIVYPTEKVNCLDKFWHKACF).

Interacts with F-actin. Interacts with ANKRD54. Interacts with KBTBD10. In terms of processing, phosphorylated.

It localises to the cytoplasm. Its subcellular location is the cell cortex. It is found in the cytoskeleton. In terms of biological role, plays an important role in the regulation of dynamic actin-based, cytoskeletal activities. Agonist-dependent changes in LASP1 phosphorylation may also serve to regulate actin-associated ion transport activities, not only in the parietal cell but also in certain other F-actin-rich secretory epithelial cell types. This is LIM and SH3 domain protein 1 (LASP1) from Sus scrofa (Pig).